The following is a 617-amino-acid chain: DNA mismatch repair protein MutL (617 aa).

This sequence belongs to the DNA mismatch repair MutL/HexB family.

In terms of biological role, this protein is involved in the repair of mismatches in DNA. It is required for dam-dependent methyl-directed DNA mismatch repair. May act as a 'molecular matchmaker', a protein that promotes the formation of a stable complex between two or more DNA-binding proteins in an ATP-dependent manner without itself being part of a final effector complex. The protein is DNA mismatch repair protein MutL of Bartonella tribocorum (strain CIP 105476 / IBS 506).